The sequence spans 525 residues: GMP synthase [glutamine-hydrolyzing] (525 aa).

A Glutamine amidotransferase type-1 domain is found at 8-207; the sequence is KILILDFGSQ…AVAICGCGTN (200 aa). The Nucleophile role is filled by C85. Residues H181 and E183 contribute to the active site. The region spanning 208–400 is the GMPS ATP-PPase domain; it reads WKPSSIIEDA…LGLPYNMLYR (193 aa). 235 to 241 is a binding site for ATP; the sequence is SGGVDSS.

In terms of assembly, homodimer.

The catalysed reaction is XMP + L-glutamine + ATP + H2O = GMP + L-glutamate + AMP + diphosphate + 2 H(+). It functions in the pathway purine metabolism; GMP biosynthesis; GMP from XMP (L-Gln route): step 1/1. In terms of biological role, catalyzes the synthesis of GMP from XMP. The protein is GMP synthase [glutamine-hydrolyzing] of Shewanella denitrificans (strain OS217 / ATCC BAA-1090 / DSM 15013).